The chain runs to 184 residues: Isopentenyl-diphosphate Delta-isomerase (184 aa).

Mn(2+) is bound by residues H25 and H32. One can recognise a Nudix hydrolase domain in the interval 30–164 (PLHLAFSCWL…PWAFSPWMVL (135 aa)). Residue C67 is part of the active site. Position 69 (H69) interacts with Mn(2+). Residue E87 coordinates Mg(2+). Residues E114 and E116 each contribute to the Mn(2+) site. E116 is a catalytic residue.

It belongs to the IPP isomerase type 1 family. In terms of assembly, homodimer. The cofactor is Mg(2+). Mn(2+) serves as cofactor.

The protein resides in the cytoplasm. The enzyme catalyses isopentenyl diphosphate = dimethylallyl diphosphate. It participates in isoprenoid biosynthesis; dimethylallyl diphosphate biosynthesis; dimethylallyl diphosphate from isopentenyl diphosphate: step 1/1. In terms of biological role, catalyzes the 1,3-allylic rearrangement of the homoallylic substrate isopentenyl (IPP) to its highly electrophilic allylic isomer, dimethylallyl diphosphate (DMAPP). The polypeptide is Isopentenyl-diphosphate Delta-isomerase (Klebsiella pneumoniae subsp. pneumoniae (strain ATCC 700721 / MGH 78578)).